The sequence spans 437 residues: Amino-acid acetyltransferase (437 aa).

Residues 289-437 (ECIRLATSFD…SKVLMLALDN (149 aa)) enclose the N-acetyltransferase domain.

Belongs to the acetyltransferase family. ArgA subfamily.

It localises to the cytoplasm. The catalysed reaction is L-glutamate + acetyl-CoA = N-acetyl-L-glutamate + CoA + H(+). It functions in the pathway amino-acid biosynthesis; L-arginine biosynthesis; N(2)-acetyl-L-ornithine from L-glutamate: step 1/4. The protein is Amino-acid acetyltransferase of Haemophilus ducreyi (strain 35000HP / ATCC 700724).